A 561-amino-acid chain; its full sequence is MGSSRAPRMGSVGGHGLMALLMAGLILPGILAKSIGTLSDPCKDPTRITSPNDPCLIGKTGSNSISSQGGSSSFSSQGGSSSFSSHGGSSSSQGSSSGSLIYKPGTGYSQSSYSYGSGGSRPGGSGSQSGSSGSQSGSSGSQSGSSGSQSGSSGSQSGSSGSQSGSSGSQSGSSGSQSGSSGSQSGRWVSSSSQWVSSSSQSGSSGSSRDRPGSGSALPTGDKTSGMSQSGGSSTSQSSSSNLRPCSSNVPDSPCSGGPVITHSGPYISGTHTVSGGQRPVVVVVEQHGSGGPGFQGMPCSNGGPAGKPCPPITSVQKPYGGYEVVGGSANSYLVPGMTYSGGKIYPVGYFTKDNPIRGSPGAPSFAAGPPVSEGKYFSSNPIIPSRGSSSSSGYPVGVAFQPVGSGGVQPCGTGSVSSKGPCSGTRIQITSSSSSTSYHPCSGGPSQGPCSSPGTGSISGGSSSLSSGKIVLQPCGSKSTSSGYPCLSVPSSPLNGGLNGSPQPVPSVGVKLCGLNSPGRVPCRSIRNILTQVKPLGPQLMDPKVSLPQGEPQGEPLEKS.

The signal sequence occupies residues 1–32 (MGSSRAPRMGSVGGHGLMALLMAGLILPGILA). Disordered regions lie at residues 41–275 (PCKD…HTVS), 415–466 (GSVS…SSSL), and 536–561 (PLGP…LEKS). A compositionally biased stretch (low complexity) spans 61–99 (GSNSISSQGGSSSFSSQGGSSSFSSHGGSSSSQGSSSGS). Positions 116–127 (GSGGSRPGGSGS) are enriched in gly residues. Composition is skewed to low complexity over residues 128–207 (QSGS…SSGS) and 224–248 (TSGM…PCSS). A compositionally biased stretch (polar residues) spans 415 to 430 (GSVSSKGPCSGTRIQI). The span at 431 to 466 (TSSSSSTSYHPCSGGPSQGPCSSPGTGSISGGSSSL) shows a compositional bias: low complexity.

It localises to the secreted. Important for the epidermal barrier integrity. This is Corneodesmosin (Cdsn) from Mus musculus (Mouse).